The chain runs to 117 residues: Fluoride-specific ion channel FluC 2 (117 aa).

2 helical membrane-spanning segments follow: residues 1–21 and 46–66; these read MISIILVMIGGGFGAIARSAI and FLIGLTIGLSISISWFPAFFV. Na(+)-binding residues include G71 and T74. The chain crosses the membrane as a helical span at residues 95–115; that stretch reads LFLNYSLLQFIIGFIACYIGY.

It belongs to the fluoride channel Fluc/FEX (TC 1.A.43) family.

The protein localises to the cell membrane. The catalysed reaction is fluoride(in) = fluoride(out). Its activity is regulated as follows. Na(+) is not transported, but it plays an essential structural role and its presence is essential for fluoride channel function. Functionally, fluoride-specific ion channel. Important for reducing fluoride concentration in the cell, thus reducing its toxicity. In Staphylococcus aureus (strain NCTC 8325 / PS 47), this protein is Fluoride-specific ion channel FluC 2.